The chain runs to 177 residues: Large ribosomal subunit protein uL10 (177 aa).

Belongs to the universal ribosomal protein uL10 family. In terms of assembly, part of the ribosomal stalk of the 50S ribosomal subunit. The N-terminus interacts with L11 and the large rRNA to form the base of the stalk. The C-terminus forms an elongated spine to which L12 dimers bind in a sequential fashion forming a multimeric L10(L12)X complex.

In terms of biological role, forms part of the ribosomal stalk, playing a central role in the interaction of the ribosome with GTP-bound translation factors. This chain is Large ribosomal subunit protein uL10, found in Xanthomonas axonopodis pv. citri (strain 306).